The sequence spans 185 residues: Elongation factor P (185 aa).

It belongs to the elongation factor P family.

The protein localises to the cytoplasm. It functions in the pathway protein biosynthesis; polypeptide chain elongation. In terms of biological role, involved in peptide bond synthesis. Stimulates efficient translation and peptide-bond synthesis on native or reconstituted 70S ribosomes in vitro. Probably functions indirectly by altering the affinity of the ribosome for aminoacyl-tRNA, thus increasing their reactivity as acceptors for peptidyl transferase. This chain is Elongation factor P, found in Desulfitobacterium hafniense (strain DSM 10664 / DCB-2).